Reading from the N-terminus, the 488-residue chain is Beta-amylase (488 aa).

The substrate site is built by Asp51, His91, and Asp99. Residue Glu184 is the Proton donor of the active site. Positions 293, 298, and 340 each coordinate substrate. The active-site Proton acceptor is Glu378. Substrate contacts are provided by residues Asn379–Ala380 and Arg418.

It belongs to the glycosyl hydrolase 14 family.

It carries out the reaction Hydrolysis of (1-&gt;4)-alpha-D-glucosidic linkages in polysaccharides so as to remove successive maltose units from the non-reducing ends of the chains.. This chain is Beta-amylase (BMY1), found in Zea mays (Maize).